A 432-amino-acid chain; its full sequence is Trigger factor (432 aa).

Positions 161 to 246 (EDRVTIDFTG…LKKVEERELP (86 aa)) constitute a PPIase FKBP-type domain.

It belongs to the FKBP-type PPIase family. Tig subfamily.

It localises to the cytoplasm. The enzyme catalyses [protein]-peptidylproline (omega=180) = [protein]-peptidylproline (omega=0). In terms of biological role, involved in protein export. Acts as a chaperone by maintaining the newly synthesized protein in an open conformation. Functions as a peptidyl-prolyl cis-trans isomerase. This Klebsiella pneumoniae (strain 342) protein is Trigger factor.